The sequence spans 361 residues: Phospho-N-acetylmuramoyl-pentapeptide-transferase (361 aa).

Helical transmembrane passes span 27-47 (GALF…ISLL), 72-92 (TPTM…LLWA), 99-119 (VWVT…DDYL), 135-155 (LALE…YSPA), 169-189 (ALLN…VGAG), 200-220 (GLAI…AYLV), 240-260 (LAVV…FNAP), 264-284 (IFMG…IAVA), 289-309 (IVLA…IIQV), and 338-358 (QVVI…LATL).

It belongs to the glycosyltransferase 4 family. MraY subfamily. The cofactor is Mg(2+).

It is found in the cell inner membrane. The enzyme catalyses UDP-N-acetyl-alpha-D-muramoyl-L-alanyl-gamma-D-glutamyl-meso-2,6-diaminopimeloyl-D-alanyl-D-alanine + di-trans,octa-cis-undecaprenyl phosphate = di-trans,octa-cis-undecaprenyl diphospho-N-acetyl-alpha-D-muramoyl-L-alanyl-D-glutamyl-meso-2,6-diaminopimeloyl-D-alanyl-D-alanine + UMP. It functions in the pathway cell wall biogenesis; peptidoglycan biosynthesis. Catalyzes the initial step of the lipid cycle reactions in the biosynthesis of the cell wall peptidoglycan: transfers peptidoglycan precursor phospho-MurNAc-pentapeptide from UDP-MurNAc-pentapeptide onto the lipid carrier undecaprenyl phosphate, yielding undecaprenyl-pyrophosphoryl-MurNAc-pentapeptide, known as lipid I. This Methylobacterium radiotolerans (strain ATCC 27329 / DSM 1819 / JCM 2831 / NBRC 15690 / NCIMB 10815 / 0-1) protein is Phospho-N-acetylmuramoyl-pentapeptide-transferase.